The sequence spans 302 residues: Sulfate adenylyltransferase subunit 2 (302 aa).

The protein belongs to the PAPS reductase family. CysD subfamily. In terms of assembly, heterodimer composed of CysD, the smaller subunit, and CysN.

It catalyses the reaction sulfate + ATP + H(+) = adenosine 5'-phosphosulfate + diphosphate. The protein operates within sulfur metabolism; hydrogen sulfide biosynthesis; sulfite from sulfate: step 1/3. In terms of biological role, with CysN forms the ATP sulfurylase (ATPS) that catalyzes the adenylation of sulfate producing adenosine 5'-phosphosulfate (APS) and diphosphate, the first enzymatic step in sulfur assimilation pathway. APS synthesis involves the formation of a high-energy phosphoric-sulfuric acid anhydride bond driven by GTP hydrolysis by CysN coupled to ATP hydrolysis by CysD. The protein is Sulfate adenylyltransferase subunit 2 of Escherichia coli O157:H7 (strain EC4115 / EHEC).